The following is a 285-amino-acid chain: ATP synthase gamma chain (285 aa).

Belongs to the ATPase gamma chain family. In terms of assembly, F-type ATPases have 2 components, CF(1) - the catalytic core - and CF(0) - the membrane proton channel. CF(1) has five subunits: alpha(3), beta(3), gamma(1), delta(1), epsilon(1). CF(0) has three main subunits: a, b and c.

The protein localises to the cell membrane. Functionally, produces ATP from ADP in the presence of a proton gradient across the membrane. The gamma chain is believed to be important in regulating ATPase activity and the flow of protons through the CF(0) complex. The protein is ATP synthase gamma chain of Clostridium novyi (strain NT).